A 273-amino-acid chain; its full sequence is MTAPTIQPGELGIEVVADSAGRTRTASLRQRYPQRVTMPLHCDPDRPGAVTLCVQSPSGGTFSDDELRTTVACRAGSHLHLTTQSATQVFAGDGAGARHHLDFTVDRGAALEYYPGTVIPHTDSTFTQTIEVNVETGGLYLGWEAVAAGRLAHGERYGYHTYDSAILARVDGRAVARDRQVIRPGTDAMSLLEGDYLATLLVVAPGADIEALLRRLRATLDDGSGVSGGAGRLPAHAGVFLRLIAQRAPDLHRARTDLFAAARRELLPGKDES.

The protein belongs to the UreD family. As to quaternary structure, ureD, UreF and UreG form a complex that acts as a GTP-hydrolysis-dependent molecular chaperone, activating the urease apoprotein by helping to assemble the nickel containing metallocenter of UreC. The UreE protein probably delivers the nickel.

Its subcellular location is the cytoplasm. Required for maturation of urease via the functional incorporation of the urease nickel metallocenter. The protein is Urease accessory protein UreD of Mycolicibacterium gilvum (strain PYR-GCK) (Mycobacterium gilvum (strain PYR-GCK)).